The following is a 197-amino-acid chain: Protein-methionine-sulfoxide reductase heme-binding subunit MsrQ (197 aa).

6 helical membrane-spanning segments follow: residues 10 to 30, 42 to 62, 75 to 95, 110 to 130, 147 to 167, and 169 to 189; these read IFIV…MNLL, LGLG…LQKL, LGLW…FFIL, PYII…VTSN, LVYA…RSDL, and EWAI…PAVA.

The protein belongs to the MsrQ family. In terms of assembly, heterodimer of a catalytic subunit (MsrP) and a heme-binding subunit (MsrQ). It depends on FMN as a cofactor. The cofactor is heme b.

It is found in the cell inner membrane. Its function is as follows. Part of the MsrPQ system that repairs oxidized periplasmic proteins containing methionine sulfoxide residues (Met-O), using respiratory chain electrons. Thus protects these proteins from oxidative-stress damage caused by reactive species of oxygen and chlorine generated by the host defense mechanisms. MsrPQ is essential for the maintenance of envelope integrity under bleach stress, rescuing a wide series of structurally unrelated periplasmic proteins from methionine oxidation. MsrQ provides electrons for reduction to the reductase catalytic subunit MsrP, using the quinone pool of the respiratory chain. The sequence is that of Protein-methionine-sulfoxide reductase heme-binding subunit MsrQ from Pseudomonas putida (strain ATCC 47054 / DSM 6125 / CFBP 8728 / NCIMB 11950 / KT2440).